The following is a 40-amino-acid chain: Antimicrobial peptide 2 (40 aa).

A Chitin-binding type-1 domain is found at 1–40 (AQCGAQGGGATCPGGLCCSQWGWCGSTPKYCGAGCQSNCR). 4 disulfide bridges follow: Cys-3–Cys-18, Cys-12–Cys-24, Cys-17–Cys-31, and Cys-35–Cys-39.

Post-translationally, not glycosylated.

Functionally, antimicrobial peptide active against plant pathogenic fungi and Gram-negative and -positive bacteria. The chain is Antimicrobial peptide 2 from Fagopyrum esculentum (Common buckwheat).